Reading from the N-terminus, the 388-residue chain is Phosphopentomutase (388 aa).

6 residues coordinate Mn(2+): Asp-11, Asp-283, His-288, Asp-324, His-325, and His-336.

This sequence belongs to the phosphopentomutase family. It depends on Mn(2+) as a cofactor.

The protein resides in the cytoplasm. The enzyme catalyses 2-deoxy-alpha-D-ribose 1-phosphate = 2-deoxy-D-ribose 5-phosphate. It catalyses the reaction alpha-D-ribose 1-phosphate = D-ribose 5-phosphate. Its pathway is carbohydrate degradation; 2-deoxy-D-ribose 1-phosphate degradation; D-glyceraldehyde 3-phosphate and acetaldehyde from 2-deoxy-alpha-D-ribose 1-phosphate: step 1/2. Isomerase that catalyzes the conversion of deoxy-ribose 1-phosphate (dRib-1-P) and ribose 1-phosphate (Rib-1-P) to deoxy-ribose 5-phosphate (dRib-5-P) and ribose 5-phosphate (Rib-5-P), respectively. This chain is Phosphopentomutase, found in Anaeromyxobacter sp. (strain K).